The following is a 261-amino-acid chain: 1-(5-phosphoribosyl)-5-[(5-phosphoribosylamino)methylideneamino] imidazole-4-carboxamide isomerase (261 aa).

Catalysis depends on Asp15, which acts as the Proton acceptor. Asp136 functions as the Proton donor in the catalytic mechanism.

The protein belongs to the HisA/HisF family.

Its subcellular location is the cytoplasm. It carries out the reaction 1-(5-phospho-beta-D-ribosyl)-5-[(5-phospho-beta-D-ribosylamino)methylideneamino]imidazole-4-carboxamide = 5-[(5-phospho-1-deoxy-D-ribulos-1-ylimino)methylamino]-1-(5-phospho-beta-D-ribosyl)imidazole-4-carboxamide. The protein operates within amino-acid biosynthesis; L-histidine biosynthesis; L-histidine from 5-phospho-alpha-D-ribose 1-diphosphate: step 4/9. The protein is 1-(5-phosphoribosyl)-5-[(5-phosphoribosylamino)methylideneamino] imidazole-4-carboxamide isomerase of Synechococcus sp. (strain JA-3-3Ab) (Cyanobacteria bacterium Yellowstone A-Prime).